Reading from the N-terminus, the 233-residue chain is 5'-methylthioadenosine/S-adenosylhomocysteine nucleosidase (233 aa).

The Proton acceptor role is filled by E12. Substrate is bound by residues G78, I152, and 173–174 (ME). Catalysis depends on D197, which acts as the Proton donor.

Belongs to the PNP/UDP phosphorylase family. MtnN subfamily. In terms of assembly, homodimer.

It catalyses the reaction S-adenosyl-L-homocysteine + H2O = S-(5-deoxy-D-ribos-5-yl)-L-homocysteine + adenine. The enzyme catalyses S-methyl-5'-thioadenosine + H2O = 5-(methylsulfanyl)-D-ribose + adenine. It carries out the reaction 5'-deoxyadenosine + H2O = 5-deoxy-D-ribose + adenine. It participates in amino-acid biosynthesis; L-methionine biosynthesis via salvage pathway; S-methyl-5-thio-alpha-D-ribose 1-phosphate from S-methyl-5'-thioadenosine (hydrolase route): step 1/2. In terms of biological role, catalyzes the irreversible cleavage of the glycosidic bond in both 5'-methylthioadenosine (MTA) and S-adenosylhomocysteine (SAH/AdoHcy) to adenine and the corresponding thioribose, 5'-methylthioribose and S-ribosylhomocysteine, respectively. Also cleaves 5'-deoxyadenosine, a toxic by-product of radical S-adenosylmethionine (SAM) enzymes, into 5-deoxyribose and adenine. Thus, is required for in vivo function of the radical SAM enzymes biotin synthase and lipoic acid synthase, that are inhibited by 5'-deoxyadenosine accumulation. In Yersinia pseudotuberculosis serotype O:1b (strain IP 31758), this protein is 5'-methylthioadenosine/S-adenosylhomocysteine nucleosidase.